The sequence spans 229 residues: Platelet-activating factor acetylhydrolase IB subunit alpha2 (229 aa).

An N-acetylserine modification is found at Ser2. Phosphoserine is present on Ser2. The active site involves Ser48. The residue at position 64 (Ser64) is a Phosphoserine. Catalysis depends on residues Asp193 and His196. Position 220 is a phosphothreonine (Thr220).

Belongs to the 'GDSL' lipolytic enzyme family. Platelet-activating factor acetylhydrolase IB beta/gamma subunits subfamily. As to quaternary structure, forms a catalytic dimer which is either homodimer (alpha2/alpha2 homodimer) or heterodimer with PAFAH1B3 (alpha2/alpha1 heterodimer). Component of the cytosolic (PAF-AH (I)) heterotetrameric enzyme, which is composed of PAFAH1B1 (beta), PAFAH1B2 (alpha2) and PAFAH1B3 (alpha1) subunits. The catalytic activity of the enzyme resides in the alpha1 (PAFAH1B3) and alpha2 (PAFAH1B2) subunits, whereas the beta subunit (PAFAH1B1) has regulatory activity. Trimer formation is not essential for the catalytic activity. Interacts (homodimer form) with PAFAH1B1 (homodimer form); PAFAH1B2 competes with NDEL1 for PAFAH1B1 binding. Interacts with VLDLR; this interaction may modulate the Reelin pathway.

Its subcellular location is the cytoplasm. It carries out the reaction a 1-O-alkyl-2-acetyl-sn-glycero-3-phosphocholine + H2O = a 1-O-alkyl-sn-glycero-3-phosphocholine + acetate + H(+). It catalyses the reaction 1-O-hexadecyl-2-acetyl-sn-glycero-3-phosphocholine + H2O = 1-O-hexadecyl-sn-glycero-3-phosphocholine + acetate + H(+). The enzyme catalyses 1-O-hexadecyl-2-acetyl-sn-glycero-3-phosphate + H2O = 1-O-hexadecyl-sn-glycero-3-phosphate + acetate + H(+). The catalysed reaction is 1-O-hexadecyl-2-acetyl-sn-glycero-3-phosphoethanolamine + H2O = 1-O-hexadecyl-sn-glycero-3-phosphoethanolamine + acetate + H(+). With respect to regulation, beta subunit (PAFAH1B1) stimulates the acetylhydrolase activity of the alpha2/alpha2 catalytic homodimer. Its function is as follows. Alpha2 catalytic subunit of the cytosolic type I platelet-activating factor (PAF) acetylhydrolase (PAF-AH (I)) heterotetrameric enzyme that catalyzes the hydrolyze of the acetyl group at the sn-2 position of PAF and its analogs and modulates the action of PAF. The activity and substrate specificity of PAF-AH (I) are affected by its subunit composition. The alpha2/alpha2 homodimer (PAFAH1B2/PAFAH1B2 homodimer) hydrolyzes PAF and 1-O-alkyl-2-acetyl-sn-glycero-3-phosphorylethanolamine (AAGPE) more efficiently than 1-O-alkyl-2-acetyl-sn-glycero-3-phosphoric acid (AAGPA). In contrast, the alpha1/alpha2 heterodimer(PAFAH1B3/PAFAH1B3 heterodimer) hydrolyzes AAGPA more efficiently than PAF, but has little hydrolytic activity towards AAGPE. May play a role in male germ cell meiosis during the late pachytenestage and meiotic divisions as well as early spermiogenesis. The polypeptide is Platelet-activating factor acetylhydrolase IB subunit alpha2 (Mus musculus (Mouse)).